Consider the following 524-residue polypeptide: MDEESLAAALQTYRAQLEQVDLTLRAVTDPTQLEDLTQLHTDLQQLIELTESSLLSIQKCNLLTSLEGNPSLPFHEDPISLPALEVPTSLSSQDKEYEAFRMAISEESQPLGSNDETSTCSKGSEEEEEEEEEEEDNTSGMKVKAPYYSTWGTLEYHNAMVVGSEQMEDGEAGVRVLYLYPTHKAMKPCPFFLDGKCLFNDNCRFSHGQVVSVTELQPFKEADLGSLAVDSPCLAQHNDGIWYPARITDIESGFYTVKFDSLLLKESVLEADSIIPPLRGSDSSSSSSSDEEEDGAAEDSVYAKVLGQEIAGTTCSSEFGGWEAHTRGIGSKLLVRMGYEFGKGLGRNAEGRVEPIQAVVLPKGKSLDQCMEIQQRKKAGGKHKHKTSKRRPKASGQGGGAKARDIFDFLNEKLEGKFTSACTAETQKTGEKKGKELYNASKDSKRALSVQVAITAEKIKQKQREICHLKESLARNAGRESVISNQLEVRLSGARKELAGLQQEERSLQREQKKADTHKKMTEF.

The tract at residues 105–142 (SEESQPLGSNDETSTCSKGSEEEEEEEEEEEDNTSGMK) is disordered. A compositionally biased stretch (polar residues) spans 106–122 (EESQPLGSNDETSTCSK). Residues 125-137 (EEEEEEEEEEEDN) show a composition bias toward acidic residues. The C3H1-type zinc finger occupies 184–210 (KAMKPCPFFLDGKCLFNDNCRFSHGQV). The disordered stretch occupies residues 279–298 (RGSDSSSSSSSDEEEDGAAE). The region spanning 326–372 (TRGIGSKLLVRMGYEFGKGLGRNAEGRVEPIQAVVLPKGKSLDQCME) is the G-patch domain. Disordered regions lie at residues 375–402 (QRKK…GGAK) and 500–524 (GLQQ…MTEF). Over residues 376–393 (RKKAGGKHKHKTSKRRPK) the composition is skewed to basic residues.

The protein localises to the nucleus. In terms of biological role, transcription repressor that specifically binds the 5'-GGAG[GA]A[GA]A-3' consensus sequence. Represses transcription by recruiting the chromatin multiprotein complex NuRD to target promoters. Negatively regulates expression of EGFR, a gene involved in cell proliferation, survival and migration. This Xenopus laevis (African clawed frog) protein is Zinc finger CCCH-type with G patch domain-containing protein (zgpat).